The sequence spans 390 residues: Magnesium-protoporphyrin IX monomethyl ester [oxidative] cyclase (390 aa).

It belongs to the AcsF family. It depends on Fe cation as a cofactor.

The enzyme catalyses Mg-protoporphyrin IX 13-monomethyl ester + 3 NADPH + 3 O2 + 2 H(+) = 3,8-divinyl protochlorophyllide a + 3 NADP(+) + 5 H2O. It functions in the pathway porphyrin-containing compound metabolism; chlorophyll biosynthesis (light-independent). Its function is as follows. Catalyzes the formation of the isocyclic ring in chlorophyll biosynthesis. Mediates the cyclase reaction, which results in the formation of divinylprotochlorophyllide (Pchlide) characteristic of all chlorophylls from magnesium-protoporphyrin IX 13-monomethyl ester (MgPMME). The sequence is that of Magnesium-protoporphyrin IX monomethyl ester [oxidative] cyclase from Prochlorococcus marinus (strain AS9601).